The chain runs to 434 residues: Glutamate-1-semialdehyde 2,1-aminomutase 1 (434 aa).

The residue at position 270 (lysine 270) is an N6-(pyridoxal phosphate)lysine.

It belongs to the class-III pyridoxal-phosphate-dependent aminotransferase family. HemL subfamily. Homodimer. The cofactor is pyridoxal 5'-phosphate.

It localises to the cytoplasm. It catalyses the reaction (S)-4-amino-5-oxopentanoate = 5-aminolevulinate. It participates in porphyrin-containing compound metabolism; protoporphyrin-IX biosynthesis; 5-aminolevulinate from L-glutamyl-tRNA(Glu): step 2/2. The chain is Glutamate-1-semialdehyde 2,1-aminomutase 1 from Bacillus thuringiensis (strain Al Hakam).